We begin with the raw amino-acid sequence, 219 residues long: Ras-related protein Rab-3B (219 aa).

At Ala-2 the chain carries N-acetylalanine. The GTP site is built by Ser-31, Ser-32, Val-33, Gly-34, Lys-35, Thr-36, Ser-37, Pro-49, and Ser-53. A Mg(2+)-binding site is contributed by Thr-36. A Switch 1 motif is present at residues 45–58; sequence DTFTPAFVSTVGID. Mg(2+) is bound by residues Thr-54 and Asp-77. The Switch 2 motif lies at 78-96; that stretch reads TAGQERYRTITTAYYRGAM. Gly-80 is a binding site for GTP. Position 86 is a phosphothreonine (Thr-86). Residues Asn-135, Lys-136, Asp-138, Ala-166, and Lys-167 each coordinate GTP. Residues Ser-188 and Ser-190 each carry the phosphoserine modification. 2 S-geranylgeranyl cysteine lipidation sites follow: Cys-217 and Cys-219. Cys-219 bears the Cysteine methyl ester mark.

The protein belongs to the small GTPase superfamily. Rab family. In terms of assembly, interacts with RPH3A and RPH3AL. Interacts with RIMS1. Interacts with RIMS2. The GTP-bound form interacts with GAS8/DRC4 (via coiled-coil domains). Interacts with GDI2, and CHM; phosphorylation at Thr-86 disrupts these interactions. Interacts with MADD (via uDENN domain); the GTP-bound form is preferred for interaction. Mg(2+) is required as a cofactor. Phosphorylation of Thr-86 in the switch II region by LRRK2 prevents the association of RAB regulatory proteins, including CHM and RAB GDP dissociation inhibitor GDI2.

Its subcellular location is the cell membrane. It localises to the golgi apparatus. The catalysed reaction is GTP + H2O = GDP + phosphate + H(+). Regulated by guanine nucleotide exchange factors (GEFs) which promote the exchange of bound GDP for free GTP. Regulated by GTPase activating proteins (GAPs) which increase the GTP hydrolysis activity. Inhibited by GDP dissociation inhibitors (GDIs) which prevent Rab-GDP dissociation. Functionally, the small GTPases Rab are key regulators of intracellular membrane trafficking, from the formation of transport vesicles to their fusion with membranes. Rabs cycle between an inactive GDP-bound form and an active GTP-bound form that is able to recruit to membranes different sets of downstream effectors directly responsible for vesicle formation, movement, tethering and fusion. In Rattus norvegicus (Rat), this protein is Ras-related protein Rab-3B.